A 466-amino-acid chain; its full sequence is cAMP-dependent protein kinase regulatory subunit (466 aa).

Residues 25–231 (QFAANYFTKR…RLEKAVGKNF (207 aa)) form a dimerization and phosphorylation region. The segment covering 71–80 (ASLSHGSSKA) has biased composition (low complexity). Disordered stretches follow at residues 71–90 (ASLSHGSSKANASQSGISSS), 109–139 (STHIVDHLDSTHSNTTASPAKASGGDAPGIF), 154–179 (NSSVDPMAPEPTATTHSFPRRSVVNP), and 193–218 (SVSGETLQPDHLDDWKPENFQEKSPE). Over residues 81–90 (NASQSGISSS) the composition is skewed to polar residues. The segment covering 109 to 118 (STHIVDHLDS) has biased composition (basic and acidic residues). Ser193 is subject to Phosphoserine. The span at 200-218 (QPDHLDDWKPENFQEKSPE) shows a compositional bias: basic and acidic residues. Residues 232–347 (LFNK…LLKN), Glu297, Arg306, 350–466 (ILKS…RSKH), Glu416, and Arg425 each bind 3',5'-cyclic AMP.

Belongs to the cAMP-dependent kinase regulatory chain family. In terms of assembly, tetramer, composed of 2 regulatory (R) and 2 catalytic (C) subunits. In the presence of cAMP it dissociates into 2 active monomeric C subunits and an R dimer.

The polypeptide is cAMP-dependent protein kinase regulatory subunit (PKAR) (Kluyveromyces lactis (strain ATCC 8585 / CBS 2359 / DSM 70799 / NBRC 1267 / NRRL Y-1140 / WM37) (Yeast)).